A 255-amino-acid chain; its full sequence is uncharacterized protein (255 aa).

Belongs to the methyltransferase superfamily.

This is an uncharacterized protein from Bacillus subtilis (strain 168).